The chain runs to 288 residues: Shikimate dehydrogenase (NADP(+)) (288 aa).

Residues 22 to 24 (SLS) and threonine 69 contribute to the shikimate site. Residue lysine 73 is the Proton acceptor of the active site. Shikimate contacts are provided by asparagine 94 and aspartate 110. NADP(+) contacts are provided by residues 131–135 (GSGGA) and leucine 228. Tyrosine 230 provides a ligand contact to shikimate. An NADP(+)-binding site is contributed by glycine 251.

This sequence belongs to the shikimate dehydrogenase family. In terms of assembly, homodimer.

It catalyses the reaction shikimate + NADP(+) = 3-dehydroshikimate + NADPH + H(+). The protein operates within metabolic intermediate biosynthesis; chorismate biosynthesis; chorismate from D-erythrose 4-phosphate and phosphoenolpyruvate: step 4/7. Functionally, involved in the biosynthesis of the chorismate, which leads to the biosynthesis of aromatic amino acids. Catalyzes the reversible NADPH linked reduction of 3-dehydroshikimate (DHSA) to yield shikimate (SA). The polypeptide is Shikimate dehydrogenase (NADP(+)) (Synechococcus sp. (strain JA-2-3B'a(2-13)) (Cyanobacteria bacterium Yellowstone B-Prime)).